The chain runs to 421 residues: Methionine aminopeptidase 2 (421 aa).

The segment at 1-53 (MTDAEIENSPASDLKELNLENEGVEQQDQAKADESDPVESKKKKNKKKKKKKS) is disordered. A compositionally biased stretch (basic and acidic residues) spans 28-40 (DQAKADESDPVES). The residue at position 35 (Ser-35) is a Phosphoserine. Residues 41–53 (KKKKNKKKKKKKS) are compositionally biased toward basic residues. His-174 lines the substrate pocket. Residues Asp-194, Asp-205, and His-274 each coordinate a divalent metal cation. Residue His-282 participates in substrate binding. Residues Glu-307 and Glu-402 each contribute to the a divalent metal cation site.

Belongs to the peptidase M24A family. Methionine aminopeptidase eukaryotic type 2 subfamily. The cofactor is Co(2+). Zn(2+) serves as cofactor. Mn(2+) is required as a cofactor. Requires Fe(2+) as cofactor.

It is found in the cytoplasm. The catalysed reaction is Release of N-terminal amino acids, preferentially methionine, from peptides and arylamides.. Cotranslationally removes the N-terminal methionine from nascent proteins. The N-terminal methionine is often cleaved when the second residue in the primary sequence is small and uncharged (Met-Ala-, Cys, Gly, Pro, Ser, Thr, or Val). The protein is Methionine aminopeptidase 2 of Saccharomyces cerevisiae (strain RM11-1a) (Baker's yeast).